A 724-amino-acid polypeptide reads, in one-letter code: Phenylalanine ammonia-lyase (724 aa).

Tyr91 acts as the Proton donor/acceptor in catalysis. Positions 205–207 (ASG) form a cross-link, 5-imidazolinone (Ala-Gly). 2,3-didehydroalanine (Ser) is present on Ser206. (E)-cinnamate contacts are provided by Asn265, Gln357, Arg363, Asn393, Lys467, Glu495, and Asn498.

The protein belongs to the PAL/histidase family. In terms of assembly, homotetramer. Post-translationally, contains an active site 4-methylidene-imidazol-5-one (MIO), which is formed autocatalytically by cyclization and dehydration of residues Ala-Ser-Gly.

It localises to the cytoplasm. The enzyme catalyses L-phenylalanine = (E)-cinnamate + NH4(+). The protein operates within phenylpropanoid metabolism; trans-cinnamate biosynthesis; trans-cinnamate from L-phenylalanine: step 1/1. In terms of biological role, catalyzes the non-oxidative deamination of L-phenylalanine to form trans-cinnamic acid and a free ammonium ion. Facilitates the commitment step in phenylpropanoid pathways that produce secondary metabolites such as lignins, coumarins and flavonoids. This chain is Phenylalanine ammonia-lyase (PAL1), found in Mycosarcoma maydis (Corn smut fungus).